A 202-amino-acid polypeptide reads, in one-letter code: Neurensin-2 (202 aa).

2 helical membrane-spanning segments follow: residues 65 to 85 (VAVA…GYAV) and 116 to 136 (VVGA…LFLI). The segment at 162–202 (RDEPEKLSPAFHETSSQSPFLTPPSPFGQQSVQTSQPQRDL) is disordered. Over residues 188 to 202 (FGQQSVQTSQPQRDL) the composition is skewed to polar residues.

The protein belongs to the VMP family. As to expression, expressed specifically in brain where it is widely expressed, with highest levels of expression in thalamus and hypothalamus. In brain, found in neural cell bodies and detected in many regions of the limbic system, such as the septum nucleus, horizontal and vertical limbs of the diagonal band, hippocampus, amygdaloid nucleus, and habernula nucleus. Also localizes to small vesicles found in the perinuclear region of Neuro2a and PC12 cells.

The protein localises to the membrane. Functionally, may play a role in maintenance and/or transport of vesicles. This Mus musculus (Mouse) protein is Neurensin-2.